The following is a 218-amino-acid chain: Leucine-rich repeat protein 2 (218 aa).

The N-terminal stretch at 1–27 (MVAQNSRRELLAASLILTLALIRLTEA) is a signal peptide. LRR repeat units lie at residues 69 to 93 (HHQVTRLDLGNSNLSGHLVPELGKL), 94 to 117 (EHLQYLELYKNEIQGTIPSELGNL), 119 to 141 (SLISLDLYNNNLTGKIPSSLGKL), 142 to 165 (KSLVFLRLNENRLTGPIPRELTVI), and 167 to 190 (SLKVVDVSGNDLCGTIPVEGPFEH).

Functionally, probably involved in plant defense response. The protein is Leucine-rich repeat protein 2 of Arabidopsis thaliana (Mouse-ear cress).